The sequence spans 684 residues: MSAQDFLVELGTEELPPKALNTLAEAFLAGIDKGLQAAGLNYESKTVYAAPRRLAVLITALATQQPDRSINLDGPPRQAAFDADGNPTQAALGFAKKCGVELSEIDQSGPKLRYSQNIAGKPTASLLPTIVEDSLNDLPIPKRMRWGARKEEFVRPTQWLVMLLGDQIIDCTILAQKAGRESRGHRFHHPQSVRIGSPSSYLADLRAAYVLADANERREIISKRTEELATRQEGTAIVPPALLDEVTALVEWPVPLVCSFEERFLDVPQEALITTMQDNQKYFCLLDADGKLLPRFITVANIESKDPQQIIAGNEKVVRPRLTDAEFFFKQDKKQKLEAFNDRLQNVVFQEKLGSVYDKAERVSKLAAYIAARIGGNASWAARAGLLSKCDLATEMVGEFPEMQGVAGYYYALNDGEPEDVALALNEQYMPRGAGAELPATLTGAAVAIADKLDTLVGIFGIGMLPTGSKDPYALRRAALGVLRILIEKQLDLDLNDAVAFAVNAFGAKVKAAGLNDAVLEFIFDRLRARYEDEGVGVATYLSVRALKPGSALDFDQRVQAVQAFRKLPEAAALAAVNKRVSNLLSKVEGSVPTEVQAKYFDNANEFSLYSAIQQADQAVQPMAAARQYNESLARLAALREPVDAFFDAVMVNAEDANVRANRYALLARLRGLFLGVADISLLG.

This sequence belongs to the class-II aminoacyl-tRNA synthetase family. In terms of assembly, tetramer of two alpha and two beta subunits.

Its subcellular location is the cytoplasm. It carries out the reaction tRNA(Gly) + glycine + ATP = glycyl-tRNA(Gly) + AMP + diphosphate. In Pseudomonas fluorescens (strain Pf0-1), this protein is Glycine--tRNA ligase beta subunit.